A 168-amino-acid polypeptide reads, in one-letter code: Crossover junction endodeoxyribonuclease RuvC (168 aa).

Catalysis depends on residues Asp7, Glu66, and Asp138. Residues Asp7, Glu66, and Asp138 each contribute to the Mg(2+) site.

It belongs to the RuvC family. In terms of assembly, homodimer which binds Holliday junction (HJ) DNA. The HJ becomes 2-fold symmetrical on binding to RuvC with unstacked arms; it has a different conformation from HJ DNA in complex with RuvA. In the full resolvosome a probable DNA-RuvA(4)-RuvB(12)-RuvC(2) complex forms which resolves the HJ. It depends on Mg(2+) as a cofactor.

The protein localises to the cytoplasm. The enzyme catalyses Endonucleolytic cleavage at a junction such as a reciprocal single-stranded crossover between two homologous DNA duplexes (Holliday junction).. In terms of biological role, the RuvA-RuvB-RuvC complex processes Holliday junction (HJ) DNA during genetic recombination and DNA repair. Endonuclease that resolves HJ intermediates. Cleaves cruciform DNA by making single-stranded nicks across the HJ at symmetrical positions within the homologous arms, yielding a 5'-phosphate and a 3'-hydroxyl group; requires a central core of homology in the junction. The consensus cleavage sequence is 5'-(A/T)TT(C/G)-3'. Cleavage occurs on the 3'-side of the TT dinucleotide at the point of strand exchange. HJ branch migration catalyzed by RuvA-RuvB allows RuvC to scan DNA until it finds its consensus sequence, where it cleaves and resolves the cruciform DNA. This Cereibacter sphaeroides (strain ATCC 17023 / DSM 158 / JCM 6121 / CCUG 31486 / LMG 2827 / NBRC 12203 / NCIMB 8253 / ATH 2.4.1.) (Rhodobacter sphaeroides) protein is Crossover junction endodeoxyribonuclease RuvC.